The following is a 194-amino-acid chain: E3 ubiquitin-protein ligase RNF4 (194 aa).

Positions 1–12 are enriched in basic residues; it reads MSTRNPQRKRRG. The interval 1-20 is required for ubiquitination activity; the sequence is MSTRNPQRKRRGGAVNSRQT. Positions 1–36 are disordered; that stretch reads MSTRNPQRKRRGGAVNSRQTQKRTRETTSTPEISLE. Residues 6-65 form a mediates interaction with TRPS1 region; sequence PQRKRRGGAVNSRQTQKRTRETTSTPEISLEAEPIELVETVGDEIVDLTCESLEPVVVDL. Short sequence motifs (SUMO interaction motif) lie at residues 40–43, 50–53, 61–63, and 71–74; these read IELV, IVDL, VVV, and VVIV. S98 and S99 each carry phosphoserine. Residues C136, C139, C158, H160, C163, C166, C177, and C180 each coordinate Zn(2+). The RING-type zinc-finger motif lies at 136–181; sequence CPICMDGYSEIVQNGRLIVSTECGHVFCSQCLRDSLKNANTCPTCR.

In terms of assembly, homodimer (via RING-type zinc finger domain). Interacts with GSC2. Interacts with AR/the androgen receptor and TBP. Interacts with TCF20. Interacts with PATZ1. Interacts with TRPS1; negatively regulates TRPS1 transcriptional repressor activity. Interacts with PML (isoform PML-1, isoform PML-2, isoform PML-3, isoform PML-4, isoform PML-5 and isoform PML-6). Interacts with PRDM1/Blimp-1. Post-translationally, sumoylated; conjugated by one or two SUMO1 moieties. Autoubiquitinated. As to expression, widely expressed with highest levels in testis.

It is found in the cytoplasm. The protein localises to the nucleus. The protein resides in the nucleoplasm. It localises to the PML body. It catalyses the reaction S-ubiquitinyl-[E2 ubiquitin-conjugating enzyme]-L-cysteine + [acceptor protein]-L-lysine = [E2 ubiquitin-conjugating enzyme]-L-cysteine + N(6)-ubiquitinyl-[acceptor protein]-L-lysine.. It participates in protein modification; protein ubiquitination. E3 ubiquitin-protein ligase which binds polysumoylated chains covalently attached to proteins and mediates 'Lys-6'-, 'Lys-11'-, 'Lys-48'- and 'Lys-63'-linked polyubiquitination of those substrates and their subsequent targeting to the proteasome for degradation. Regulates the degradation of several proteins including PML and the transcriptional activator PEA3. Involved in chromosome alignment and spindle assembly, it regulates the kinetochore CENPH-CENPI-CENPK complex by targeting polysumoylated CENPI to proteasomal degradation. Regulates the cellular responses to hypoxia and heat shock through degradation of respectively EPAS1 and PARP1. Alternatively, it may also bind DNA/nucleosomes and have a more direct role in the regulation of transcription for instance enhancing basal transcription and steroid receptor-mediated transcriptional activation. Catalyzes ubiquitination of sumoylated PARP1 in response to PARP1 trapping to chromatin, leading to PARP1 removal from chromatin by VCP/p97. In Rattus norvegicus (Rat), this protein is E3 ubiquitin-protein ligase RNF4.